A 547-amino-acid polypeptide reads, in one-letter code: Carboxypeptidase N subunit 2 (547 aa).

A signal peptide spans 1 to 21 (MFPGAWLCWVSLLLLARLTQP). An LRRNT domain is found at 22-49 (CPVGCDCFGREVFCSDEQLADIPPDIPP). N-linked (GlcNAc...) asparagine glycans are attached at residues asparagine 74, asparagine 111, and asparagine 119. LRR repeat units lie at residues 98 to 119 (RLQD…IFSN), 122 to 143 (SLEK…LFCH), 146 to 167 (ILES…LFQS), 170 to 191 (DLRT…AFQS), 194 to 215 (GLQM…ALGS), 218 to 239 (SLQE…LFSQ), 242 to 263 (SLEM…LFSS), 266 to 287 (NLTF…LFAH), 290 to 311 (GLLH…AFTN), 314 to 335 (RLVS…VFRN), 338 to 359 (QLVK…LFHN), and 362 to 383 (RLQL…IFDT). Asparagine 266 and asparagine 311 each carry an N-linked (GlcNAc...) asparagine glycan. 3 N-linked (GlcNAc...) asparagine glycosylation sites follow: asparagine 348, asparagine 359, and asparagine 367. Positions 395 to 447 (NPWQCDCHLSYLTSWLRLYNNQISNTHTFCAGPAYLKGQLVPNLKQEQLICPV) constitute an LRRCT domain. An N-linked (GlcNAc...) asparagine glycan is attached at asparagine 520.

As to quaternary structure, tetramer of two catalytic chains and two glycosylated inactive chains.

It localises to the secreted. In terms of biological role, the 83 kDa subunit binds and stabilizes the catalytic subunit at 37 degrees Celsius and keeps it in circulation. Under some circumstances it may be an allosteric modifier of the catalytic subunit. This is Carboxypeptidase N subunit 2 (Cpn2) from Mus musculus (Mouse).